The primary structure comprises 456 residues: Transcription factor bHLH62 (456 aa).

Residues 159-185 (RTNSPFPINNEPPITTNEKMPRVSSSP) are compositionally biased toward polar residues. Positions 159–254 (RTNSPFPINN…KTKSIDPYKD (96 aa)) are disordered. Residues 223 to 254 (KEIEEKEDSDPKRCKKSEENGDKTKSIDPYKD) are compositionally biased toward basic and acidic residues. The region spanning 264 to 314 (QATDSHSLAERVRREKISERMKLLQDLVPGCNKVTGKALMLDEIINYVQSL) is the bHLH domain.

As to quaternary structure, homodimer. As to expression, expressed constitutively in roots, leaves, stems, and flowers.

It localises to the nucleus. The sequence is that of Transcription factor bHLH62 (BHLH62) from Arabidopsis thaliana (Mouse-ear cress).